Consider the following 188-residue polypeptide: Pro-FMRFamide-related neuropeptide VF (188 aa).

The first 26 residues, 1-26, serve as a signal peptide directing secretion; the sequence is MEIISLKRFILLTVATSSFLTSNTFC. Residues 27 to 57 constitute a propeptide that is removed on maturation; the sequence is TDEFMMPHFHSKEGDGKYSQLRGIPKGEKER. A Phenylalanine amide modification is found at Phe94. A propeptide spanning residues 97-106 is cleaved from the precursor; sequence TIDEKRSPAA. Disordered regions lie at residues 116 to 144 and 163 to 188; these read SHFPSLPQRFGRTTARSPKTPADLPQKPL and IQSPGGKRTRRGAFVETDDAERKPEK. Residue Phe125 is modified to Phenylalanine amide. Residues 128 to 188 constitute a propeptide that is removed on maturation; the sequence is TTARSPKTPA…TDDAERKPEK (61 aa).

This sequence belongs to the FARP (FMRFamide related peptide) family.

The protein resides in the secreted. In terms of biological role, efficiently inhibits forskolin-induced production of cAMP. Acts as a potent negative regulator of gonadotropin synthesis and secretion. Induces secretion of prolactin. Functionally, efficiently inhibits forskolin-induced production of cAMP. Blocks morphine-induced analgesia. The sequence is that of Pro-FMRFamide-related neuropeptide VF (Npvf) from Mus musculus (Mouse).